Here is a 153-residue protein sequence, read N- to C-terminus: ATP synthase subunit a (153 aa).

2 helical membrane-spanning segments follow: residues A43 to F63 and I104 to I124.

Belongs to the ATPase A chain family. F-type ATPases have 2 components, CF(1) - the catalytic core - and CF(0) - the membrane proton channel. CF(1) has five subunits: alpha(3), beta(3), gamma(1), delta(1), epsilon(1). CF(0) has three main subunits: a(1), b(2) and c(9-12). The alpha and beta chains form an alternating ring which encloses part of the gamma chain. CF(1) is attached to CF(0) by a central stalk formed by the gamma and epsilon chains, while a peripheral stalk is formed by the delta and b chains.

The protein resides in the cell inner membrane. Functionally, key component of the proton channel; it plays a direct role in the translocation of protons across the membrane. The polypeptide is ATP synthase subunit a (atpB) (Pseudomonas putida (Arthrobacter siderocapsulatus)).